The following is a 430-amino-acid chain: Ribosomal protein uS12 methylthiotransferase RimO (430 aa).

Residues 1-116 enclose the MTTase N-terminal domain; sequence MRVGIKVLGC…IANAIENGTD (116 aa). [4Fe-4S] cluster-binding residues include Cys10, Cys46, Cys79, Cys148, Cys152, and Cys155. Residues 134–365 form the Radical SAM core domain; the sequence is LEERPYAYVK…LLQAEISNSR (232 aa). Residues 367–430 enclose the TRAM domain; it reads DRFVGKKLKF…DEYDMWGSVI (64 aa).

The protein belongs to the methylthiotransferase family. RimO subfamily. The cofactor is [4Fe-4S] cluster.

It localises to the cytoplasm. It carries out the reaction L-aspartate(89)-[ribosomal protein uS12]-hydrogen + (sulfur carrier)-SH + AH2 + 2 S-adenosyl-L-methionine = 3-methylsulfanyl-L-aspartate(89)-[ribosomal protein uS12]-hydrogen + (sulfur carrier)-H + 5'-deoxyadenosine + L-methionine + A + S-adenosyl-L-homocysteine + 2 H(+). Functionally, catalyzes the methylthiolation of an aspartic acid residue of ribosomal protein uS12. The polypeptide is Ribosomal protein uS12 methylthiotransferase RimO (Thermotoga petrophila (strain ATCC BAA-488 / DSM 13995 / JCM 10881 / RKU-1)).